A 595-amino-acid chain; its full sequence is L-fucose isomerase (595 aa).

Active-site proton acceptor residues include glutamate 341 and aspartate 365. Mn(2+) contacts are provided by glutamate 341, aspartate 365, and histidine 531.

It belongs to the L-fucose isomerase family. Mn(2+) serves as cofactor.

The protein localises to the cytoplasm. It carries out the reaction L-fucose = L-fuculose. Its pathway is carbohydrate degradation; L-fucose degradation; L-lactaldehyde and glycerone phosphate from L-fucose: step 1/3. Functionally, converts the aldose L-fucose into the corresponding ketose L-fuculose. The polypeptide is L-fucose isomerase (Clostridium perfringens (strain 13 / Type A)).